The sequence spans 441 residues: MTSAIWHERRLGEEKLRRNDHRSPYQRDRARILHSAAFRRLQAKTQVLGVGMNDFYRTRLTHSLEVSQIGTGICAQLKQKYPDLHHLLDSMSLIESLCLAHDIGHPPFGHGGEVALNYMMRSDGGFEGNGQTFRILTALEPYTQHFGMNLTRRTLLGILKYPASHNELYQSQPRPEVDSYRQLKPSQWRPVKGIFFEDKPVLDWVLEPLSTQDRERFVSAEPGERDQHRRTRYKSLDCSIMELADDTAYAIHDLEDAIVMGIVTQAMWQQDVSSLLAGSDDEWIAKEFATIGDKLFALENHLRKDAIGTLVNGFVTAILIDENPNFIEPLLRYNARLEPPFAEALHVLKQFVYKRVIRKPEIQMLEYKGQQIVMELFEAFASDPERLLPLNTQERWQQMAQQEGNCNRVIADYISGMTDEFAARLHQHLFSAKAGSLIDLQ.

Positions 59 to 250 (RLTHSLEVSQ…MELADDTAYA (192 aa)) constitute an HD domain.

This sequence belongs to the dGTPase family. Type 2 subfamily.

The chain is Deoxyguanosinetriphosphate triphosphohydrolase-like protein from Shewanella loihica (strain ATCC BAA-1088 / PV-4).